The following is a 642-amino-acid chain: Triacylglycerol lipase 3 (642 aa).

The PNPLA domain occupies 204–392; it reads LILQGGSLFG…NEIEPFLNIN (189 aa). The GXSXG motif lies at 235–239; it reads GSSMG. S237 functions as the Nucleophile in the catalytic mechanism. An HXXXXD acyltransferase motif motif is present at residues 298–303; the sequence is HGYSQD. E403 functions as the Proton acceptor in the catalytic mechanism. Positions 471 to 481 are enriched in polar residues; sequence RKTQRSSSQSP. The disordered stretch occupies residues 471-502; sequence RKTQRSSSQSPIKAGTVEDLEPEPLMSPVPPS.

Its subcellular location is the lipid droplet. It catalyses the reaction a triacylglycerol + H2O = a diacylglycerol + a fatty acid + H(+). The catalysed reaction is 1,2,3-tri-(9Z-octadecenoyl)-glycerol + H2O = di-(9Z)-octadecenoylglycerol + (9Z)-octadecenoate + H(+). It carries out the reaction di-(9Z)-octadecenoylglycerol + H2O = (9Z-octadecenoyl)-glycerol + (9Z)-octadecenoate + H(+). The enzyme catalyses a 1-acyl-sn-glycero-3-phosphoethanolamine + (9Z)-octadecenoyl-CoA = 1-acyl-2-(9Z)-octadecenoyl-sn-glycero-3-phosphoethanolamine + CoA. It catalyses the reaction a 1-acyl-sn-glycero-3-phosphoethanolamine + hexadecanoyl-CoA = 1-acyl-2-hexadecanoyl-sn-glycero-3-phosphoethanolamine + CoA. Loses its lipolytic activity in cells lacking nonpolar lipids. Lipid particle-localized triacylglycerol (TAG) lipase. The lipid droplet/particle is a lipid storage compartment which serves as a depot of energy and building blocks for membrane lipid biosynthesis. Involved in the mobilization of the non-polar storage lipids triacylglycerols (TAGs) from lipid particles by hydrolysis of TAGs, releasing and supplying specific fatty acids to the appropriate metabolic pathways. Also catalyzes the acylation of lysophosphatidic acid (LPA). Important for efficient sporulation, but rather through its acyltransferase than lipase activity. The protein is Triacylglycerol lipase 3 (TGL3) of Saccharomyces cerevisiae (strain ATCC 204508 / S288c) (Baker's yeast).